The following is an 805-amino-acid chain: MASPSGQYIFGEFSDDEFKQFFVTARCTVELPPYNEHFFPCGPQSSVDFQDDMHLKFSEVIHGISGEECPRIEFGIEQVVDRDTALNNNTDYSISSNLNPQAPEFILTCSSFPKTSNNVLHENNFDAINCQFSESAIPDGSGNADSDGTSGTGQRERKKKKKRPPGYYSYLEGVGDVPSETLVNGHANSTGLDSISTDDPDLADDIPISTTSPRTCTSPDNFVDLINEALSDEASMHNVLDNARTAGQPEECSVTSSEQSCIPSDNGSESPVRTAVVQPFAGTDTTENLGVTNGQTLESPEEDTVSNGVVLHPEVSSFSEEVKTEETSTAQALIHLSGSASSNPPAKSWASLFHTSKPSSSPQVAYVETKNAPTVVSPQVPEKQVEIKEEPVPVSDDPVAIEFAELLEEVKLVHKPVSLQPRGLINKGNWCYINATLQALVACPPMYHLMKSIPVYTKAQRPCTSTPMIDSFVRLMNEFTNMPILPKAKQAPGEKVIKDIRPGAPFEPTYIYRLLTVFKSSLSEKGRQEDAEEYLGFILNGLHEEMLALKKLLLPQNDQIHINNCPNPVSGVEEVNKEEQEGSDEEWEQVGPRNKSSVTRQADFVQTPITDIFGGHMRSVVYQQSSKESATLQPFFTLQLDIQSEKIRTVQDALESLVARESVQGYTTKTKQEVEICRRVTLEELPPVLVLHLKRFVFEKTGGCQKLIKNIEYPVDLEVSKDLLSPGVKSKIFKGQRTYRLFAVVYHHGNSATGGHYTTDVFQIGLNGWLRIDDQSVKVINQYQVVKQTVERTAYLLYYRRVDLL.

Disordered stretches follow at residues 136–173 (AIPDGSGNADSDGTSGTGQRERKKKKKRPPGYYSYLEG) and 284–305 (DTTENLGVTNGQTLESPEEDTV). Composition is skewed to polar residues over residues 143–153 (NADSDGTSGTG) and 284–298 (DTTENLGVTNGQTLE). The USP domain maps to 422 to 802 (RGLINKGNWC…TAYLLYYRRV (381 aa)). The active-site Nucleophile is Cys431. Positions 573–600 (EEVNKEEQEGSDEEWEQVGPRNKSSVTR) are disordered. His756 functions as the Proton acceptor in the catalytic mechanism.

This sequence belongs to the peptidase C19 family. USP10 subfamily.

It is found in the cytoplasm. Its subcellular location is the nucleus. It carries out the reaction Thiol-dependent hydrolysis of ester, thioester, amide, peptide and isopeptide bonds formed by the C-terminal Gly of ubiquitin (a 76-residue protein attached to proteins as an intracellular targeting signal).. Hydrolase that can remove conjugated ubiquitin from target proteins such as p53/tp53, rps2/us5, rps3/us3, rps10/eS10, becn1, snx3 and cftr. Acts as an essential regulator of p53/tp53 stability: in unstressed cells, specifically deubiquitinates p53/tp53 in the cytoplasm, leading to counteracts MDM2 action and stabilize p53/tp53. Following DNA damage, translocates to the nucleus and deubiquitinates p53/tp53, leading to regulate the p53/TP53-dependent DNA damage response. Component of a regulatory loop that controls autophagy and p53/tp53 levels. Plays a key role in 40S ribosome subunit recycling when a ribosome has stalled during translation: acts both by inhibiting formation of stress granules, which store stalled translation pre-initiation complexes, and mediating deubiquitination of 40S ribosome subunits. Deubiquitinates cftr in early endosomes, enhancing its endocytic recycling. This Xenopus laevis (African clawed frog) protein is Ubiquitin carboxyl-terminal hydrolase 10-B (usp10-b).